The chain runs to 490 residues: Endoglucanase 13 (490 aa).

Residues 1–26 form the signal peptide; that stretch reads MSQLKNGSSQCLWTSICIVLIVMSMA. N6 carries an N-linked (GlcNAc...) asparagine glycan. The active-site Nucleophile is D86. Active-site residues include H412, D464, and E473.

Belongs to the glycosyl hydrolase 9 (cellulase E) family.

It localises to the secreted. It catalyses the reaction Endohydrolysis of (1-&gt;4)-beta-D-glucosidic linkages in cellulose, lichenin and cereal beta-D-glucans.. The polypeptide is Endoglucanase 13 (Arabidopsis thaliana (Mouse-ear cress)).